The following is a 125-amino-acid chain: Acidic phospholipase A2 6 (125 aa).

A signal peptide is located at residue Ser-1. Residues 2–7 (NRPMPL) constitute a propeptide that is removed on maturation. 7 disulfides stabilise this stretch: Cys-18–Cys-77, Cys-33–Cys-124, Cys-35–Cys-50, Cys-49–Cys-105, Cys-56–Cys-98, Cys-66–Cys-91, and Cys-84–Cys-96. Zn(2+) is bound at residue Asp-30. Tyr-34 and Gly-36 together coordinate Ca(2+). Residue His-53 is part of the active site. Asp-54 serves as a coordination point for Ca(2+). The active site involves Asp-99.

As to quaternary structure, heterodimer formed between isoform 5 and isoform 6 in presence of zinc ion and monomer in absence of zinc ion. It depends on Ca(2+) as a cofactor. As to expression, expressed by the venom gland.

The protein resides in the secreted. It carries out the reaction a 1,2-diacyl-sn-glycero-3-phosphocholine + H2O = a 1-acyl-sn-glycero-3-phosphocholine + a fatty acid + H(+). Functionally, PLA2 catalyzes the calcium-dependent hydrolysis of the 2-acyl groups in 3-sn-phosphoglycerides. The polypeptide is Acidic phospholipase A2 6 (Naja sagittifera (Andaman cobra)).